Consider the following 104-residue polypeptide: Large ribosomal subunit protein uL24 (104 aa).

This sequence belongs to the universal ribosomal protein uL24 family. Part of the 50S ribosomal subunit.

In terms of biological role, one of two assembly initiator proteins, it binds directly to the 5'-end of the 23S rRNA, where it nucleates assembly of the 50S subunit. Functionally, one of the proteins that surrounds the polypeptide exit tunnel on the outside of the subunit. The protein is Large ribosomal subunit protein uL24 of Treponema denticola (strain ATCC 35405 / DSM 14222 / CIP 103919 / JCM 8153 / KCTC 15104).